A 400-amino-acid polypeptide reads, in one-letter code: Cytohesin-2 (400 aa).

Residues 10–63 (DLTPEERMELENIRRRKQELLVEIQRLREELSEAMSEVEGLEANEGSKTLQRNR) are a coiled coil. In terms of domain architecture, SEC7 spans 72 to 201 (FNMDPKKGIQ…VIMLNTSLHN (130 aa)). The 118-residue stretch at 259–376 (NPDREGWLLK…WIKSIQAAVS (118 aa)) folds into the PH domain. Residues 268 to 276 (KLGGGRVKT), Arg280, Tyr291, Arg301, Lys339, Asn350, and His351 each bind a 1,2-diacyl-sn-glycero-3-phospho-(1D-myo-inositol-3,4,5-trisphosphate). Residues 387–395 (RKKRISVKK) form a C-terminal autoinhibitory region region.

Heteromer. Composed of TAMALIN, CYTH2 and at least one GRM1. Interacts with ARRB1. Interacts with ARL4D; the interaction is direct. Directly interacts with CCDC120 through the coiled coil domain; this interaction stabilizes CCDC120, possibly by preventing its ubiquitination, and is required for neurite growth in neuroblastoma cells. Interacts with ARF1. Interacts with FRMD4A. Interacts (via N-terminal domain) with INAVA (via N-terminal domain). In terms of tissue distribution, widely expressed.

The protein localises to the cell membrane. It is found in the cytoplasm. Its subcellular location is the cell projection. It localises to the growth cone. The protein resides in the cell junction. The protein localises to the tight junction. It is found in the adherens junction. Acts as a guanine-nucleotide exchange factor (GEF). Promotes guanine-nucleotide exchange on ARF1, ARF3 and ARF6. Activates ARF factors through replacement of GDP with GTP. The cell membrane form, in association with ARL4 proteins, recruits ARF6 to the plasma membrane. Involved in neurite growth. This chain is Cytohesin-2, found in Homo sapiens (Human).